The primary structure comprises 510 residues: NAD(P)H-quinone oxidoreductase subunit 2 B, chloroplastic (510 aa).

A run of 13 helical transmembrane segments spans residues 24–44 (LLLFDGSFIFPECILIFGLIL), 57–77 (IPWLYFISSTSLVMSITALLF), 99–119 (IFQFLILLCSTLCIPLSVEYI), 124–144 (MAITEFLLFVLTATLGGMFLC), 149–169 (LITIFVAPECFSLCSYLLSGY), 183–203 (YLLMGGASSSILVHAFSWLYG), 227–247 (PGISIALIFITVGIGFKLSLA), 295–315 (WHLLLEILAILSMIVGNLIAI), 323–343 (MLAYSSIGQIGYVIIGIIVGD), 354–374 (YMLFYISMNLGTFACIVLFGL), 395–415 (ALSLALCLLSLGGLPPLAGFF), 418–438 (LHLFWCGWQAGLYFLVLIGLL), and 482–502 (LSMIVCVIASTIPGISMNPIV).

The protein belongs to the complex I subunit 2 family. In terms of assembly, NDH is composed of at least 16 different subunits, 5 of which are encoded in the nucleus.

It is found in the plastid. The protein localises to the chloroplast thylakoid membrane. The enzyme catalyses a plastoquinone + NADH + (n+1) H(+)(in) = a plastoquinol + NAD(+) + n H(+)(out). The catalysed reaction is a plastoquinone + NADPH + (n+1) H(+)(in) = a plastoquinol + NADP(+) + n H(+)(out). In terms of biological role, NDH shuttles electrons from NAD(P)H:plastoquinone, via FMN and iron-sulfur (Fe-S) centers, to quinones in the photosynthetic chain and possibly in a chloroplast respiratory chain. The immediate electron acceptor for the enzyme in this species is believed to be plastoquinone. Couples the redox reaction to proton translocation, and thus conserves the redox energy in a proton gradient. This Manihot esculenta (Cassava) protein is NAD(P)H-quinone oxidoreductase subunit 2 B, chloroplastic.